A 295-amino-acid polypeptide reads, in one-letter code: Voltage-gated potassium channel (295 aa).

The Cytoplasmic portion of the chain corresponds to 1–38; the sequence is MSVERWVFPGCSVMARFRRGLSDLGGRVRNIGDVMEHP. The helical transmembrane segment at 39–63 threads the bilayer; the sequence is LVELGVSYAALLSVIVVVVEYTMQL. Residues 64–67 lie on the Extracellular side of the membrane; sequence SGEY. The helical transmembrane segment at 68–92 threads the bilayer; sequence LVRLYLVDLILVIILWADYAYRAYK. Over 93–96 the chain is Cytoplasmic; it reads SGDP. An intramembrane region (helical) is located at residues 97 to 105; the sequence is AGYVKKTLY. Residues 106 to 108 are Extracellular-facing; the sequence is EIP. The helical; Voltage-sensor transmembrane segment at 109–125 threads the bilayer; the sequence is ALVPAGLLALIEGHLAG. Over 126-128 the chain is Cytoplasmic; sequence LGL. The chain crosses the membrane as a helical; Voltage-sensor span at residues 129–145; sequence FRLVRLLRFLRILLIIS. Residues 146 to 159 are Cytoplasmic-facing; it reads RGSKFLSAIADAAD. The helical transmembrane segment at 160 to 184 threads the bilayer; that stretch reads KIRFYHLFGAVMLTVLYGAFAIYIV. The Extracellular segment spans residues 185–195; sequence EYPDPNSSIKS. Residues 196 to 208 constitute an intramembrane region (pore-forming); sequence VFDALWWAVVTAT. A Selectivity filter motif is present at residues 209–214; the sequence is TVGYGD. Topologically, residues 209 to 221 are extracellular; the sequence is TVGYGDVVPATPI. The helical transmembrane segment at 222–253 threads the bilayer; the sequence is GKVIGIAVMLTGISALTLLIGTVSNMFQKILV. Topologically, residues 254–295 are cytoplasmic; sequence GEPEPSCSPAKLAEMVSSMSEEEFEEFVRTLKNLRRLENSMK.

This sequence belongs to the potassium channel family.

The protein localises to the cell membrane. Its function is as follows. Mediates a strong voltage-dependent potassium ion permeability of excitable membranes. Assuming opened or closed conformations in response to the voltage difference across the membrane, the protein forms a potassium-selective channel through which potassium ions may pass in accordance with their electrochemical gradient. This chain is Voltage-gated potassium channel, found in Aeropyrum pernix (strain ATCC 700893 / DSM 11879 / JCM 9820 / NBRC 100138 / K1).